Here is a 381-residue protein sequence, read N- to C-terminus: Glycerate kinase (381 aa).

Belongs to the glycerate kinase type-1 family.

It carries out the reaction (R)-glycerate + ATP = (2R)-3-phosphoglycerate + ADP + H(+). In Bacillus cereus (strain ATCC 10987 / NRS 248), this protein is Glycerate kinase (glxK).